The chain runs to 388 residues: Riboflavin biosynthesis protein RibBA (388 aa).

The segment at 1–186 (MEELREAFEE…MDDVWREFVK (186 aa)) is DHBP synthase. D-ribulose 5-phosphate-binding positions include 21–22 (RE), Asp-26, 125–129 (RKGHT), and Glu-149. Glu-22 serves as a coordination point for Mg(2+). Mg(2+) is bound at residue His-128. A GTP cyclohydrolase II region spans residues 187-388 (RKLLMKKKAE…LEEIFREVNS (202 aa)). Position 235 to 239 (235 to 239 (RIHSE)) interacts with GTP. Zn(2+) is bound by residues Cys-240, Cys-251, and Cys-253. GTP-binding positions include Gln-256, 277 to 279 (EGR), and Thr-299. Asp-311 serves as the catalytic Proton acceptor; for GTP cyclohydrolase activity. Arg-313 acts as the Nucleophile; for GTP cyclohydrolase activity in catalysis. GTP is bound by residues Thr-334 and Lys-339.

It in the N-terminal section; belongs to the DHBP synthase family. In the C-terminal section; belongs to the GTP cyclohydrolase II family. The cofactor is Mg(2+). It depends on Mn(2+) as a cofactor. Zn(2+) is required as a cofactor.

The enzyme catalyses D-ribulose 5-phosphate = (2S)-2-hydroxy-3-oxobutyl phosphate + formate + H(+). It catalyses the reaction GTP + 4 H2O = 2,5-diamino-6-hydroxy-4-(5-phosphoribosylamino)-pyrimidine + formate + 2 phosphate + 3 H(+). It participates in cofactor biosynthesis; riboflavin biosynthesis; 2-hydroxy-3-oxobutyl phosphate from D-ribulose 5-phosphate: step 1/1. Its pathway is cofactor biosynthesis; riboflavin biosynthesis; 5-amino-6-(D-ribitylamino)uracil from GTP: step 1/4. Catalyzes the conversion of D-ribulose 5-phosphate to formate and 3,4-dihydroxy-2-butanone 4-phosphate. Functionally, catalyzes the conversion of GTP to 2,5-diamino-6-ribosylamino-4(3H)-pyrimidinone 5'-phosphate (DARP), formate and pyrophosphate. This is Riboflavin biosynthesis protein RibBA from Thermotoga maritima (strain ATCC 43589 / DSM 3109 / JCM 10099 / NBRC 100826 / MSB8).